We begin with the raw amino-acid sequence, 129 residues long: Small ribosomal subunit protein uS11 (129 aa).

It belongs to the universal ribosomal protein uS11 family. Part of the 30S ribosomal subunit. Interacts with proteins S7 and S18. Binds to IF-3.

Located on the platform of the 30S subunit, it bridges several disparate RNA helices of the 16S rRNA. Forms part of the Shine-Dalgarno cleft in the 70S ribosome. The sequence is that of Small ribosomal subunit protein uS11 from Sodalis glossinidius (strain morsitans).